The primary structure comprises 169 residues: ATP synthase subunit b (169 aa).

A helical transmembrane segment spans residues Ile11 to Phe31.

Belongs to the ATPase B chain family. F-type ATPases have 2 components, F(1) - the catalytic core - and F(0) - the membrane proton channel. F(1) has five subunits: alpha(3), beta(3), gamma(1), delta(1), epsilon(1). F(0) has three main subunits: a(1), b(2) and c(10-14). The alpha and beta chains form an alternating ring which encloses part of the gamma chain. F(1) is attached to F(0) by a central stalk formed by the gamma and epsilon chains, while a peripheral stalk is formed by the delta and b chains.

It localises to the cell membrane. F(1)F(0) ATP synthase produces ATP from ADP in the presence of a proton or sodium gradient. F-type ATPases consist of two structural domains, F(1) containing the extramembraneous catalytic core and F(0) containing the membrane proton channel, linked together by a central stalk and a peripheral stalk. During catalysis, ATP synthesis in the catalytic domain of F(1) is coupled via a rotary mechanism of the central stalk subunits to proton translocation. Its function is as follows. Component of the F(0) channel, it forms part of the peripheral stalk, linking F(1) to F(0). The protein is ATP synthase subunit b of Dehalococcoides mccartyi (strain ATCC BAA-2266 / KCTC 15142 / 195) (Dehalococcoides ethenogenes (strain 195)).